Here is a 444-residue protein sequence, read N- to C-terminus: Phosphoglucosamine mutase (444 aa).

Catalysis depends on S101, which acts as the Phosphoserine intermediate. 4 residues coordinate Mg(2+): S101, D240, D242, and D244. S101 bears the Phosphoserine mark.

This sequence belongs to the phosphohexose mutase family. Mg(2+) serves as cofactor. Post-translationally, activated by phosphorylation.

It catalyses the reaction alpha-D-glucosamine 1-phosphate = D-glucosamine 6-phosphate. Functionally, catalyzes the conversion of glucosamine-6-phosphate to glucosamine-1-phosphate. The protein is Phosphoglucosamine mutase of Photobacterium profundum (strain SS9).